The primary structure comprises 386 residues: O-phospho-L-seryl-tRNA:Cys-tRNA synthase (386 aa).

Pyridoxal 5'-phosphate contacts are provided by residues 89 to 90, asparagine 196, and 219 to 221; these read AR and SGH. The residue at position 222 (lysine 222) is an N6-(pyridoxal phosphate)lysine.

Belongs to the SepCysS family. Homodimer. Interacts with SepRS. Pyridoxal 5'-phosphate is required as a cofactor.

The enzyme catalyses O-phospho-L-seryl-tRNA(Cys) + hydrogen sulfide + H(+) = L-cysteinyl-tRNA(Cys) + phosphate. Functionally, converts O-phospho-L-seryl-tRNA(Cys) (Sep-tRNA(Cys)) to L-cysteinyl-tRNA(Cys) (Cys-tRNA(Cys)). The chain is O-phospho-L-seryl-tRNA:Cys-tRNA synthase from Methanosarcina acetivorans (strain ATCC 35395 / DSM 2834 / JCM 12185 / C2A).